Reading from the N-terminus, the 205-residue chain is High frequency lysogenization protein HflD homolog (205 aa).

The protein belongs to the HflD family.

The protein localises to the cytoplasm. It localises to the cell inner membrane. The chain is High frequency lysogenization protein HflD homolog from Shewanella sp. (strain MR-4).